A 201-amino-acid polypeptide reads, in one-letter code: 3-isopropylmalate dehydratase small subunit (201 aa).

Belongs to the LeuD family. LeuD type 1 subfamily. In terms of assembly, heterodimer of LeuC and LeuD.

It carries out the reaction (2R,3S)-3-isopropylmalate = (2S)-2-isopropylmalate. It functions in the pathway amino-acid biosynthesis; L-leucine biosynthesis; L-leucine from 3-methyl-2-oxobutanoate: step 2/4. Catalyzes the isomerization between 2-isopropylmalate and 3-isopropylmalate, via the formation of 2-isopropylmaleate. The sequence is that of 3-isopropylmalate dehydratase small subunit from Cronobacter sakazakii (strain ATCC BAA-894) (Enterobacter sakazakii).